Here is a 241-residue protein sequence, read N- to C-terminus: Lipoprotein MxiJ (241 aa).

A signal peptide spans 1–17 (MIRYKGFILFLLLMLIG). C18 carries the N-palmitoyl cysteine lipid modification. C18 carries the S-diacylglycerol cysteine lipid modification.

Belongs to the YscJ lipoprotein family.

The protein localises to the cell outer membrane. In terms of biological role, involved in the secretion of the Ipa antigens. This Shigella sonnei protein is Lipoprotein MxiJ (mxiJ).